A 339-amino-acid polypeptide reads, in one-letter code: uncharacterized protein (339 aa).

This sequence to bacterial alkanal monooxygenase alpha and beta chains.

This is an uncharacterized protein from Bacillus subtilis (strain 168).